The sequence spans 72 residues: UPF0154 protein EF_1734 (72 aa).

The chain crosses the membrane as a helical span at residues 4–26 (GWVVLIAVIALLVGAAGGFFLAR).

It belongs to the UPF0154 family.

It localises to the membrane. This Enterococcus faecalis (strain ATCC 700802 / V583) protein is UPF0154 protein EF_1734.